The following is an 824-amino-acid chain: E3 ubiquitin-protein ligase TRIM71 (824 aa).

An RING-type zinc finger spans residues Cys-23–Asp-93. Residues Ser-37–Ser-56 form a disordered region. The B box-type 1; atypical zinc-finger motif lies at Leu-147–Leu-194. The Zn(2+) site is built by Cys-152, Cys-155, Cys-176, His-180, Cys-234, His-237, Cys-257, and His-262. The B box-type 2 zinc-finger motif lies at Glu-229–Leu-270. Residues Gln-293–Lys-321 are a coiled coil. One copy of the Filamin repeat lies at Ser-435 to Val-536. NHL repeat units follow at residues Met-549 to Cys-592, His-596 to Asp-639, Leu-643 to Asp-686, Leu-690 to Asp-733, Ala-737 to Asn-780, and Leu-784 to Phe-824.

This sequence belongs to the TRIM/RBCC family.

It localises to the cytoplasm. Its subcellular location is the P-body. It catalyses the reaction S-ubiquitinyl-[E2 ubiquitin-conjugating enzyme]-L-cysteine + [acceptor protein]-L-lysine = [E2 ubiquitin-conjugating enzyme]-L-cysteine + N(6)-ubiquitinyl-[acceptor protein]-L-lysine.. The protein operates within protein modification; protein ubiquitination. In terms of biological role, E3 ubiquitin-protein ligase that cooperates with the microRNAs (miRNAs) machinery and promotes embryonic stem cells proliferation and maintenance. Binds to miRNAs and participates in post-transcriptional repression of transcripts. Required to maintain proliferation and prevent premature differentiation of neural progenitor cells during early neural development. This Danio rerio (Zebrafish) protein is E3 ubiquitin-protein ligase TRIM71 (trim71).